A 642-amino-acid polypeptide reads, in one-letter code: Threonine--tRNA ligase (642 aa).

The region spanning 1-61 (MPVITLPDGS…ENDATLAIIT (61 aa)) is the TGS domain. The segment at 243-534 (DHRKIGKQLD…LTEEFAGFFP (292 aa)) is catalytic. Zn(2+)-binding residues include C334, H385, and H511.

It belongs to the class-II aminoacyl-tRNA synthetase family. As to quaternary structure, homodimer. Zn(2+) serves as cofactor.

The protein localises to the cytoplasm. It carries out the reaction tRNA(Thr) + L-threonine + ATP = L-threonyl-tRNA(Thr) + AMP + diphosphate + H(+). Functionally, catalyzes the attachment of threonine to tRNA(Thr) in a two-step reaction: L-threonine is first activated by ATP to form Thr-AMP and then transferred to the acceptor end of tRNA(Thr). Also edits incorrectly charged L-seryl-tRNA(Thr). This is Threonine--tRNA ligase from Salmonella dublin (strain CT_02021853).